A 435-amino-acid polypeptide reads, in one-letter code: MSQKPHLNLIVIGHIDHGKSTLVGRLLMDRGFIDEKTVKEAEEAAKKLGKESEKFAFLLDRLKEERERGVTINLTFMRFETKKYFFTIIDAPGHRDFVKNMITGASQADAAILVVSAKKGEYEAGMSVEGQTREHIILAKTMGLDQLIVAVNKMDLTEPPYDEKRYKEIVDQVSKFMRSYGFNTNKVRFVPVVAPAGDNITHRSENMKWYNGPTLEEYLDQLELPPKPVDKPLRIPIQDVYSISGVGTVPVGRVESGVLKVGDKIVFMPAGKVGEVRSIETHHTKMDKAEPGDNIGFNVRGVEKKDIKRGDVVGHPNNPPTVADEFTARIIVVWHPTALANGYTPVIHVHTASVACRVSELVSKLDPRTGQEAEKNPQFLKQGDVAIVKFKPIKPLCVEKYNEFPPLGRFAMRDMGKTVGVGIIVDVKPAKVEIK.

In terms of domain architecture, tr-type G spans 4–227; sequence KPHLNLIVIG…YLDQLELPPK (224 aa). The tract at residues 13 to 20 is G1; that stretch reads GHIDHGKS. 13-20 serves as a coordination point for GTP; that stretch reads GHIDHGKS. Ser-20 is a Mg(2+) binding site. Positions 69–73 are G2; the sequence is GVTIN. Positions 90-93 are G3; the sequence is DAPG. Residues 90–94 and 152–155 each bind GTP; these read DAPGH and NKMD. The tract at residues 152-155 is G4; the sequence is NKMD. The tract at residues 193 to 195 is G5; it reads VAP.

The protein belongs to the TRAFAC class translation factor GTPase superfamily. Classic translation factor GTPase family. EF-Tu/EF-1A subfamily.

The protein resides in the cytoplasm. It carries out the reaction GTP + H2O = GDP + phosphate + H(+). In terms of biological role, GTP hydrolase that promotes the GTP-dependent binding of aminoacyl-tRNA to the A-site of ribosomes during protein biosynthesis. This is Elongation factor 1-alpha from Saccharolobus solfataricus (strain ATCC 35092 / DSM 1617 / JCM 11322 / P2) (Sulfolobus solfataricus).